We begin with the raw amino-acid sequence, 415 residues long: Arrestin domain-containing protein 4 (415 aa).

2 consecutive short sequence motifs (PPxY motif) follow at residues 347-350 (PPNY) and 392-395 (PPLY).

Belongs to the arrestin family. In terms of assembly, interacts with ADRB2. Interacts (via PPxY motifs) with ITCH, NEDD4L and WWP2. Interacts with AVPR2. Identified in a complex containing at least ARRDC4, AVPR2 and HGS. Interacts with SLC11A2; controls the incorporation of SLC11A2 into extracellular vesicles through an ubiquitination-dependent mechanism. Interacts with TRIM65.

It is found in the early endosome. The protein localises to the cell membrane. Its subcellular location is the cytoplasmic vesicle. Functions as an adapter recruiting ubiquitin-protein ligases to their specific substrates. Plays a role in endocytosis of activated G protein-coupled receptors (GPCRs). Through an ubiquitination-dependent mechanism also plays a role in the incorporation of SLC11A2 into extracellular vesicles. May play a role in glucose uptake. Participates in innate immune response by promoting IFIH1/MDA5 activation through interaction with TRIM65. The chain is Arrestin domain-containing protein 4 from Mus musculus (Mouse).